A 905-amino-acid polypeptide reads, in one-letter code: MADKTVKELADMVSKTVSAVQKQLTDAGLPARGEDDLVTELEQEQLVAFLKQSHGQKEKRRISLKSKTTSTARVTGSSGKSKSVNVEVRKKKVFEKPDPNKLAEEIAAREQAALEAKKRAEEEAKKREQVKKEAEERQAATLAAMRANLGGGSSSSDKKEELSTVVVKKGSKAAAAAKEAPKKKVAQTKPKVETAAERKARETREAEEERLRQIEAETRRKQAEEAQKKTLEQMRKMAGKYSDKDPVAEVRKDEPLAEGLVGEALEESFEKERREIKRGSASTATRGRRRKGQEEREIRNRKHGLKSSQASQHKFEKPVEKIVHDVEIGEQIVVSDLAQRMAVKAREVTKLLMKMGEIVSADQEIDQATASLIVEEMGHNPIPVSDTKVEDDLQEAVEERRSNVQTRPPVVTIMGHVDHGKTSLLDKIRETKVATGEAGGITQHIGAYHVETDRGVITFLDTPGHAAFTAMRSRGAQATDIVILVVAADDGMMPQTEEAIDHARASGTPLIVAINKMDKSTADPDRVLNELTTKEVVTEAWGGDVPMAKISAKTGEGIDELLELINLQAELMELEAPTDGAAQGVVIESRLEKGRGAVASILVKKGTLNQGDLVLAGEFYGKVRAMTDETGKRVKSAGPSIPVEILGLPDTPAAGSEFLVVSDEKKAREVAEFRATRERERQLERQNKMRLESMFEQMGQDDLSFLNIILKTDVRGTLEALLAALEDLSTDEVKVKVISSGVGPIAESDVTLAESSEAVLLGFNVRADNAAKRKADEAGIDIRYYSVIYGLIDDVKAAMSGMLSPEHREKILGIAEVRDVFRSSKFGAAAGCMVVEGTIYRNKSIRVLRDDKVAFTGQLQSLRRYKDDVNEVRSGMECGLAVRGYDVEVGDKIEVFEIQEIQRTI.

3 disordered regions span residues 52–84 (QSHG…SKSV), 116–230 (AKKR…QKKT), and 269–318 (FEKE…FEKP). Residues 65 to 84 (KSKTTSTARVTGSSGKSKSV) show a composition bias toward polar residues. The span at 116 to 138 (AKKRAEEEAKKREQVKKEAEERQ) shows a compositional bias: basic and acidic residues. Residues 165–178 (VVVKKGSKAAAAAK) are compositionally biased toward low complexity. 2 stretches are compositionally biased toward basic and acidic residues: residues 190 to 230 (PKVE…QKKT) and 269 to 278 (FEKERREIKR). One can recognise a tr-type G domain in the interval 406–575 (TRPPVVTIMG…NLQAELMELE (170 aa)). Residues 415–422 (GHVDHGKT) are G1. 415 to 422 (GHVDHGKT) serves as a coordination point for GTP. The interval 440–444 (GITQH) is G2. The interval 461 to 464 (DTPG) is G3. GTP contacts are provided by residues 461-465 (DTPGH) and 515-518 (NKMD). The G4 stretch occupies residues 515 to 518 (NKMD). Residues 551–553 (SAK) are G5.

It belongs to the TRAFAC class translation factor GTPase superfamily. Classic translation factor GTPase family. IF-2 subfamily.

It localises to the cytoplasm. One of the essential components for the initiation of protein synthesis. Protects formylmethionyl-tRNA from spontaneous hydrolysis and promotes its binding to the 30S ribosomal subunits. Also involved in the hydrolysis of GTP during the formation of the 70S ribosomal complex. This is Translation initiation factor IF-2 from Psychrobacter sp. (strain PRwf-1).